Consider the following 341-residue polypeptide: MGEFMNKKDMFVLGIETSCDETAAAIVKNGREIVANVVASQMESHQRFGGVVPEIASRHHVEQITLVLEETMKQANMDISQLDAIAVTEGPGLVGALLIGVNAAKALAFAHRIPLVGVHHIAGHIYANQLVQEMKFPLLALVVSGGHTELIYMKEHGIFEVIGETRDDAAGEAYDKVARALQLPYPGGPHIDRLAKQGKPIIDLPRAWLEEGSYDFSFSGLKSAVINTLHNAKQRGEMIRPEDMAASFQASVVEVLVRKTIEAAMHYSVKQILLAGGVAANEGLRTQLQKQMDQLPEVELVIPPLSLCTDNAAMIAAAGTVLFQQGKRATMALNANPSLLL.

The Fe cation site is built by His-120 and His-124. Substrate contacts are provided by residues 142-146 (VVSGG), Asp-175, Gly-188, Asp-192, and Asn-281. Asp-310 contributes to the Fe cation binding site.

This sequence belongs to the KAE1 / TsaD family. It depends on Fe(2+) as a cofactor.

Its subcellular location is the cytoplasm. It carries out the reaction L-threonylcarbamoyladenylate + adenosine(37) in tRNA = N(6)-L-threonylcarbamoyladenosine(37) in tRNA + AMP + H(+). Functionally, required for the formation of a threonylcarbamoyl group on adenosine at position 37 (t(6)A37) in tRNAs that read codons beginning with adenine. Is involved in the transfer of the threonylcarbamoyl moiety of threonylcarbamoyl-AMP (TC-AMP) to the N6 group of A37, together with TsaE and TsaB. TsaD likely plays a direct catalytic role in this reaction. This chain is tRNA N6-adenosine threonylcarbamoyltransferase, found in Anoxybacillus flavithermus (strain DSM 21510 / WK1).